Reading from the N-terminus, the 270-residue chain is Formamidopyrimidine-DNA glycosylase (270 aa).

The active-site Schiff-base intermediate with DNA is the proline 2. Catalysis depends on glutamate 3, which acts as the Proton donor. The active-site Proton donor; for beta-elimination activity is the lysine 58. The DNA site is built by histidine 91, arginine 110, and lysine 151. The segment at 236 to 270 (FAYGRGGQPCKVCGTTLREIKLGQRASVYCPKCQR) adopts an FPG-type zinc-finger fold. Arginine 260 (proton donor; for delta-elimination activity) is an active-site residue.

It belongs to the FPG family. As to quaternary structure, monomer. Zn(2+) serves as cofactor.

It catalyses the reaction Hydrolysis of DNA containing ring-opened 7-methylguanine residues, releasing 2,6-diamino-4-hydroxy-5-(N-methyl)formamidopyrimidine.. The catalysed reaction is 2'-deoxyribonucleotide-(2'-deoxyribose 5'-phosphate)-2'-deoxyribonucleotide-DNA = a 3'-end 2'-deoxyribonucleotide-(2,3-dehydro-2,3-deoxyribose 5'-phosphate)-DNA + a 5'-end 5'-phospho-2'-deoxyribonucleoside-DNA + H(+). Functionally, involved in base excision repair of DNA damaged by oxidation or by mutagenic agents. Acts as a DNA glycosylase that recognizes and removes damaged bases. Has a preference for oxidized purines, such as 7,8-dihydro-8-oxoguanine (8-oxoG). Has AP (apurinic/apyrimidinic) lyase activity and introduces nicks in the DNA strand. Cleaves the DNA backbone by beta-delta elimination to generate a single-strand break at the site of the removed base with both 3'- and 5'-phosphates. The polypeptide is Formamidopyrimidine-DNA glycosylase (Pseudomonas syringae pv. tomato (strain ATCC BAA-871 / DC3000)).